The sequence spans 765 residues: Nucleolar transcription factor 1 (765 aa).

Methionine 1 is modified (N-acetylmethionine). The interval 1–21 (MNGEADCPTDLEMAAPKGQDR) is disordered. 2 consecutive DNA-binding regions (HMG box) follow at residues 112–180 (PKKP…ARFR) and 196–264 (PEKP…RDYI). Residue threonine 201 is modified to Phosphothreonine. A phosphoserine mark is found at serine 273, serine 336, and serine 364. Positions 298–362 (TKPPPNSYSL…DYEVELLRFL (65 aa)) form a DNA-binding region, HMG box 3. Positions 370–379 (QQRVLGEEKM) are enriched in basic and acidic residues. Residues 370–411 (QQRVLGEEKMLNINKKQTTSPASKKPSQEGGKGGSEKPKRPV) are disordered. Phosphoserine is present on residues serine 389, serine 412, serine 433, serine 435, serine 484, serine 495, serine 546, serine 584, and serine 638. 3 consecutive DNA-binding regions (HMG box) follow at residues 407–475 (PKRP…GGER), 482–549 (PESP…SEMR), and 568–634 (KKPP…DLWV). A disordered region spans residues 456–487 (YKAREAALKAQSERKPGGEREDRGKLPESPKR). Basic and acidic residues predominate over residues 457–487 (KAREAALKAQSERKPGGEREDRGKLPESPKR). The tract at residues 546-576 (SEMRAPPAATNSSKKMKFQGEPKKPPMNGYQ) is disordered. The segment at 649-765 (ISNKRKNMTK…SGDSSDSGSN (117 aa)) is disordered. Residues 664–674 (PKSSRTTLQSK) show a composition bias toward polar residues. The segment covering 677 to 746 (SEEDDDEEEE…DDDEDEDNES (70 aa)) has biased composition (acidic residues). Over residues 747-765 (EGSSSSSSSSGDSSDSGSN) the composition is skewed to low complexity.

Homodimer. Part of Pol I pre-initiation complex (PIC), in which Pol I core assembles with RRN3 and promoter-bound UTBF and SL1/TIF-IB complex. Interacts with TOP2A in the context of Pol I complex. Interacts with TBP. Interacts with TAF1A. Interacts with RASL11A. Binds to IRS1 and PIK3CA. Interacts with DHX33. Interacts with PHF6. Interacts with CEBPA (isoform 1 and isoform 4). Interacts with DDX11. Interacts with NOP53. Interacts with ALKBH2. Post-translationally, phosphorylated and activated by PIK3CA.

Its subcellular location is the nucleus. It is found in the nucleolus. Functionally, recognizes the ribosomal RNA gene promoter and activates transcription mediated by RNA polymerase I through cooperative interactions with the transcription factor SL1/TIF-IB complex. It binds specifically to the upstream control element. This is Nucleolar transcription factor 1 (Ubtf) from Mus musculus (Mouse).